Consider the following 162-residue polypeptide: Small ribosomal subunit protein uS5 (162 aa).

The 64-residue stretch at 7-70 (EEKMILIRRT…YARRNMVEVP (64 aa)) folds into the S5 DRBM domain.

It belongs to the universal ribosomal protein uS5 family. Part of the 30S ribosomal subunit. Contacts proteins S4 and S8.

Its function is as follows. With S4 and S12 plays an important role in translational accuracy. Located at the back of the 30S subunit body where it stabilizes the conformation of the head with respect to the body. The sequence is that of Small ribosomal subunit protein uS5 (rpsE) from Thermus thermophilus (strain ATCC BAA-163 / DSM 7039 / HB27).